The primary structure comprises 356 residues: Histidinol-phosphate aminotransferase (356 aa).

Position 214 is an N6-(pyridoxal phosphate)lysine (Lys-214).

The protein belongs to the class-II pyridoxal-phosphate-dependent aminotransferase family. Histidinol-phosphate aminotransferase subfamily. Homodimer. It depends on pyridoxal 5'-phosphate as a cofactor.

The catalysed reaction is L-histidinol phosphate + 2-oxoglutarate = 3-(imidazol-4-yl)-2-oxopropyl phosphate + L-glutamate. It functions in the pathway amino-acid biosynthesis; L-histidine biosynthesis; L-histidine from 5-phospho-alpha-D-ribose 1-diphosphate: step 7/9. The protein is Histidinol-phosphate aminotransferase of Shigella dysenteriae serotype 1 (strain Sd197).